The chain runs to 331 residues: UPF0194 membrane protein YbhG (331 aa).

Positions methionine 1 to alanine 19 are cleaved as a signal peptide. A coiled-coil region spans residues arginine 140–proline 209.

This sequence belongs to the UPF0194 family.

It is found in the periplasm. The chain is UPF0194 membrane protein YbhG (ybhG) from Salmonella typhi.